Reading from the N-terminus, the 727-residue chain is MASCPDSDNSWVLAGSESLPVETLGPESGNDPESERAPRAPQSPSRAAAEESAGTLDGGETVSQNESSKSGPILSEEAEAKQGVLEGDDPGVESPGPGDTEAQGDLEETPEVVGLEPDSQDLEDQSPHRSLPSSPKTAWIREEAHHSSSDDDTDVDVEGLRRRRGREPGTPQPAATLGVEDQVQGEGAGGQLGISLNMCLLGSLVLLGLGVLLFGGLSESESGPLEEVDLQVLPDVESDTEMLEAVGDGQDGLQQLQTSEVLDSVPSLQNMALLLDKLAKENQDIRLLQAQLQAQKEELQSLMRQPKGLEEENARLRGALQQGEASQRALESELQQLRAQLQGLEADCVQGADGLCLQWGRGPQAGQVTKEQGPTGQEPSPGFLEQKKQLEAEAQALRQELERQRRLLGSVQQDLERSLKEAGRGDPARAGLAELGHRLAQKLRGLENWGQHPGVPANVSEAWHQKPHFQNSREPSGKEKWWDRQGDWKTEHWKHKKEASGREKSWRGEEDRELVGRRKEGKPRVEEWAGKKDGKQQRSKEPPRKSGRPHPSGERQKHPRWKEGAKDRHDPLPLWAELSRHKYQAPQGCSGVHECARQEGLAFFGIELAPVRQQELASLLRTYLARLPWAGPLTEELPLSPAYFGEDGIFRHDRLRFRDFVDALEDQLEEVAVRQTGDDDAVDDFEDFIFSHFFGDKALKKRSGKKDKHLQNRVVGPREEHSPHRQG.

Residues 1–10 are compositionally biased toward polar residues; the sequence is MASCPDSDNS. Residues 1–135 form a disordered region; sequence MASCPDSDNS…SPHRSLPSSP (135 aa). The span at 39–53 shows a compositional bias: low complexity; it reads RAPQSPSRAAAEESA. Ser43 carries the phosphoserine modification. Residues 61–70 show a composition bias toward polar residues; sequence TVSQNESSKS. A phosphoserine mark is found at Ser130, Ser134, Ser147, Ser148, and Ser149. Position 153 is a phosphothreonine (Thr153). Coiled-coil stretches lie at residues 269-353 and 380-421; these read QNMA…QGAD and SPGF…SLKE. The Nuclear localization signal motif lies at 488-506; it reads WKTEHWKHKKEASGREKSW. Disordered stretches follow at residues 491 to 568 and 701 to 727; these read EHWK…AKDR and KRSG…HRQG. Basic and acidic residues-rich tracts occupy residues 498–544, 551–568, and 716–727; these read EASG…EPPR, PSGE…AKDR, and GPREEHSPHRQG. Positions 696-719 match the Nuclear localization signal motif; that stretch reads DKALKKRSGKKDKHLQNRVVGPRE.

In terms of assembly, interacts with ESR1, PBX1, PBX2 and PBX3. Interacts with TEX11.

It localises to the cytoplasm. It is found in the cytoskeleton. Its subcellular location is the nucleus. Its function is as follows. Regulator of pre-B-cell leukemia transcription factors (BPXs) function. Inhibits the binding of PBX1-HOX complex to DNA and blocks the transcriptional activity of E2A-PBX1. Tethers estrogen receptor-alpha (ESR1) to microtubules and allows them to influence estrogen receptors-alpha signaling. This Bos taurus (Bovine) protein is Pre-B-cell leukemia transcription factor-interacting protein 1 (PBXIP1).